We begin with the raw amino-acid sequence, 149 residues long: MIKKKNKKRYTEVSALGKYIPMSTHKARRVIDQIRGRSYEETLMILELMPYRACYPILKLISSAAANGIHNMNFDETSLIISKAEVNEGPTAKKFKPRAKGQSYPIKRSTCHITIVLRDISLNEKYEEYIRKPWALLEKSNETEIRKRN.

This sequence belongs to the universal ribosomal protein uL22 family. In terms of assembly, part of the 50S ribosomal subunit.

It is found in the plastid. Its subcellular location is the chloroplast. This protein binds specifically to 23S rRNA. Functionally, the globular domain of the protein is located near the polypeptide exit tunnel on the outside of the subunit, while an extended beta-hairpin is found that lines the wall of the exit tunnel in the center of the 70S ribosome. The sequence is that of Large ribosomal subunit protein uL22c (rpl22-A) from Pelargonium hortorum (Common geranium).